Reading from the N-terminus, the 132-residue chain is UPF0719 inner membrane protein YjfL (132 aa).

The Periplasmic segment spans residues 1-6 (MHILDS). The chain crosses the membrane as a helical span at residues 7 to 27 (LLAFSAYFFIGVAMVIIFLFI). The Cytoplasmic segment spans residues 28 to 46 (YSKITPHNEWQLIKNNNTA). A helical membrane pass occupies residues 47–67 (ASLAFSGTLLGYVIPLSSAAI). Topologically, residues 68–71 (NAVS) are periplasmic. A helical transmembrane segment spans residues 72–92 (IPDYFAWGGIALVIQLLVFAG). Residues 93–109 (VRLYMPALSEKIINHNT) lie on the Cytoplasmic side of the membrane. A helical membrane pass occupies residues 110-130 (AAGMFMGTAALAGGIFNAACM). At 131-132 (TW) the chain is on the periplasmic side.

The protein belongs to the UPF0719 family.

It is found in the cell inner membrane. In Escherichia coli O157:H7, this protein is UPF0719 inner membrane protein YjfL (yjfL).